A 373-amino-acid chain; its full sequence is MPAKTVSHLNFETSISTETVPASPYIPGSGNVFAKFVDAISQTGWELWYFDGVSKDDQSAISIGINRSARGLEHGGFTVQIFAIWPDGHTWHRDLYFPESTVTSEDGHITGLWEDAGSGGKVSFSVTRDCSLTMLTFAVPGVVDGTMHLETLPGDSGLETNPELGPRAHIVRPKGRASVKAELSLSSGDNSASERFVLGPSANGGMDRIWTLDTWPKVMTESYYLRAQVGPYAMQITRLFSEAESGCKPYTMARLYRDGKLICAANQVLTYEEQDFSKDSLILSKRYDASSEDVVTGAYRDKNIGYVVEFVAKGTDGQRWMFQVDHERIFWSYPTSAPGPEGTGNTGFIESVIGGADEEAYFGVGIGGQCQLS.

It belongs to the Diels-Alderase family.

The enzyme catalyses (5S)-3-[(2E,6R,8E,10E,12E)-2,6-dimethyltetradeca-2,8,10,12-tetraenoyl]-5-(hydroxymethyl)pyrrolidine-2,4-dione = trichosetin. The protein operates within mycotoxin biosynthesis. In terms of biological role, hybrid PKS-NRPS synthetase; part of the gene cluster that mediates the biosynthesis of trichosetin, a trans-fused decalin-containing tetramic acid with antimicrobial activity. The PKS module of PKS-NRPS1 together with the enoylreductase (ER) catalyze the formation of the polyketide unit which is then conjugated to L-serine by the condensation domain of the PKS-NRPS1 NRPS module. Activity of the Dieckmann cyclase domain (RED) results in release of the Dieckmann product intermediate. Diels-Alderase (DA) is involved in endo-selective Diels-Alder cycloaddition to form the decalin ring, leading to the production of N-desmethylequisetin also called trichosetin. The cluster does not contain the equisetin N-methyltransferase and consequently, trichosetin is isolated as final product. The chain is Diels-Alderase from Gibberella fujikuroi (strain CBS 195.34 / IMI 58289 / NRRL A-6831) (Bakanae and foot rot disease fungus).